Consider the following 196-residue polypeptide: Early light-induced protein, chloroplastic (196 aa).

Residues 1–48 (MAVSSCQSIMSNSMTNISSRSRVNQFTNIPSVYIPTLRRNVSLKVRSM) constitute a chloroplast transit peptide. Over residues 47–57 (SMAEGEPKEQS) the composition is skewed to basic and acidic residues. The interval 47 to 81 (SMAEGEPKEQSKVAVDPTTPTASTPTPQPAYTRPP) is disordered. 3 helical membrane-spanning segments follow: residues 105–125 (LAMIGFVAAMGVEIAKGQGLS), 132–152 (GVAWFLGTSVLLSLASLIPFF), and 176–196 (IAMLGLVALAFTEFVKGTSLV).

The protein belongs to the ELIP/psbS family.

It localises to the plastid. The protein localises to the chloroplast membrane. Functionally, probably involved in the integration of pigments into the mature pigment-protein complexes. This Pisum sativum (Garden pea) protein is Early light-induced protein, chloroplastic.